An 802-amino-acid polypeptide reads, in one-letter code: Aldehyde dehydrogenase family 16 member A1 (802 aa).

The segment at Ser513–Val554 is disordered.

It belongs to the aldehyde dehydrogenase family. In terms of assembly, interacts with SPG21.

The polypeptide is Aldehyde dehydrogenase family 16 member A1 (Aldh16a1) (Rattus norvegicus (Rat)).